Consider the following 176-residue polypeptide: Translation initiation factor IF-3 (176 aa).

It belongs to the IF-3 family. Monomer.

Its subcellular location is the cytoplasm. Its function is as follows. IF-3 binds to the 30S ribosomal subunit and shifts the equilibrium between 70S ribosomes and their 50S and 30S subunits in favor of the free subunits, thus enhancing the availability of 30S subunits on which protein synthesis initiation begins. The protein is Translation initiation factor IF-3 of Nitratidesulfovibrio vulgaris (strain DSM 19637 / Miyazaki F) (Desulfovibrio vulgaris).